Reading from the N-terminus, the 393-residue chain is MARTSKAGFPDPVLITTTEDLTGVVERLRREPFVSIDTEFVRERTYWPELCLVQLAGQDEVVVVDTLAPGIDLAPLGVLLDDPEVVKVFHAARQDLEIFLYLFGHLPAALFDTQVAAMVAGFGDQVGYDNLVASLTGAHIDKAHRFSDWSARPLSEAQIAYAAADVTHLRTVYQLLLERLEREGRLDWVASDLAVLSDPATFRPDPETLWERMRPRTSNRRMLGVLRAITAWREREAQRVNVPRQRLLKDESLLEIAATAPADVDALARIRGVSRGFAEGKSGTGILEAVAAARALPDGALPRQQKGKEGPRPSPALVALLKVLLAACCEEHDVAPRLVASSEDLDRLALEPEPDLPLLQGWRRTVFGDEALALKDGRMLLGVDGTRVKRIPA.

One can recognise a 3'-5' exonuclease domain in the interval 14 to 181 (LITTTEDLTG…VYQLLLERLE (168 aa)). The HRDC domain maps to 219-300 (NRRMLGVLRA…AAARALPDGA (82 aa)).

Belongs to the RNase D family. A divalent metal cation is required as a cofactor.

Its subcellular location is the cytoplasm. The catalysed reaction is Exonucleolytic cleavage that removes extra residues from the 3'-terminus of tRNA to produce 5'-mononucleotides.. In terms of biological role, exonuclease involved in the 3' processing of various precursor tRNAs. Initiates hydrolysis at the 3'-terminus of an RNA molecule and releases 5'-mononucleotides. The polypeptide is Ribonuclease D (Gluconacetobacter diazotrophicus (strain ATCC 49037 / DSM 5601 / CCUG 37298 / CIP 103539 / LMG 7603 / PAl5)).